A 683-amino-acid polypeptide reads, in one-letter code: MDNYTLALNCNHTTHGYAHYVYSTLSYLVFIGNAPGYPNCENCIYDITFNSTSMLNISNNYFHIANATLGAPEYPEQPVTLSVIGEESPWVAWLAVHTPDKNYTEDANTARAVMRVLDPFNISWCAVYNVQSVDPTDTQDISNCTEVSEELPVNNQKSSIHLNTYFLNSTFTVSVSLNASNISSQCSGNVSLENMTSNVHIPCPTLPLTVSVKASTDNMQTGAAVNASIDIGWLLQNLTDASLTVSSSPGNLTQKNCTTYKNISKTDRHVRDENLYVLAQIPALEGHKDSFTLTRSPILLNFSRNSSEFQLVLYDRNSSCVWANPANGTDTILVSMSCPHITATISPRGEIKVNVTGNFSRNANLSLAFLSSKGKEYAGVLLQAFEPSTRPPPGTVAPGILSTTANFETSTNKSSPTYTPTPAKLSTPPGLTNTLLLTAGEHNSGIGSTLEPLTTVSVQVLQTPSSPTRDTSTLVIKLTTVPQDHKTVSPSLVTPGRTSTLPIVSMTHFSREGSSPKPQTTAAKTSSEASLPPLLTTTPTPTNTEKSQSTFASSTVSVDTTFTGDDVNTVGTMSPSITQTLPITPTSGRQYIVVGCCTLNRRSGNLFFFFLFVAAHRESGHNTSMPNPHHNSVKPEDHPHHPEGDHPDADHHERFQIWLLPIAGTIFALVALVIVNIALRMTE.

Composition is skewed to polar residues over residues 407–420 and 512–529; these read FETS…TYTP and EGSS…SSEA. Disordered regions lie at residues 407 to 427, 509 to 556, and 621 to 648; these read FETS…KLST, FSRE…SSTV, and HNTS…DHPD. Residues 531–542 show a composition bias toward low complexity; it reads LPPLLTTTPTPT. 2 stretches are compositionally biased toward polar residues: residues 543–556 and 621–630; these read NTEK…SSTV and HNTSMPNPHH. Residues 633-648 are compositionally biased toward basic and acidic residues; that stretch reads VKPEDHPHHPEGDHPD. Residues 657-677 form a helical membrane-spanning segment; sequence IWLLPIAGTIFALVALVIVNI.

The protein resides in the host membrane. This is an uncharacterized protein from Alcelaphine herpesvirus 1 (strain C500) (AlHV-1).